The chain runs to 463 residues: Type II NADH:quinone oxidoreductase Ndh (463 aa).

Residues 21–25 (GSGFG) and V89 contribute to the FAD site. E184 is an active-site residue. FAD-binding positions include D322 and 333–334 (AQ). The chain crosses the membrane as a helical span at residues 387–407 (FSGFIAWLIWLVLHLAYLIGF).

It belongs to the NADH dehydrogenase family. It depends on FAD as a cofactor.

The protein resides in the cell inner membrane. The enzyme catalyses a quinone + NADH + H(+) = a quinol + NAD(+). It carries out the reaction a menaquinone + NADH + H(+) = a menaquinol + NAD(+). The catalysed reaction is a ubiquinone + NADH + H(+) = a ubiquinol + NAD(+). Inhibited by phenothiazine analogs. Inhibited by 2-mercapto-quinazolinones. Not inhibited by classic inhibitors of type I NADH dehydrogenase, such as rotenone, piericidin A and pyridaben. Functionally, alternative, nonproton pumping NADH:quinone oxidoreductase that delivers electrons to the respiratory chain by oxidation of NADH and reduction of quinones. Ndh is probably the main NADH dehydrogenase of M.tuberculosis. The polypeptide is Type II NADH:quinone oxidoreductase Ndh (Mycobacterium tuberculosis (strain ATCC 25618 / H37Rv)).